Here is a 181-residue protein sequence, read N- to C-terminus: MMQPLYLVGPRGCGKTTIGMALAQATGFRFADTDRWLQSHVQMSVADIVEKEGWGGFRARETAALEAVSAPSTVVATGGGIILTEYNRRYMHRVGVVIYLCAPVSTLVNRLEAEPEADLRPTLTGKPLSEEVREVLEQRDALYRETAHYIIDATKTPAQVVSEIIAALPPSTQRLQGDVYT.

Residue 12-17 coordinates ATP; it reads GCGKTT. Mg(2+)-binding residues include Thr16 and Asp32. Positions 34, 58, and 79 each coordinate substrate. The tract at residues 112–126 is LID domain; that stretch reads EAEPEADLRPTLTGK. Residue Arg120 coordinates ATP. Arg139 is a substrate binding site.

This sequence belongs to the shikimate kinase family. AroL subfamily. Monomer. Mg(2+) serves as cofactor.

Its subcellular location is the cytoplasm. The catalysed reaction is shikimate + ATP = 3-phosphoshikimate + ADP + H(+). The protein operates within metabolic intermediate biosynthesis; chorismate biosynthesis; chorismate from D-erythrose 4-phosphate and phosphoenolpyruvate: step 5/7. Catalyzes the specific phosphorylation of the 3-hydroxyl group of shikimic acid using ATP as a cosubstrate. The chain is Shikimate kinase 2 from Salmonella heidelberg (strain SL476).